A 494-amino-acid polypeptide reads, in one-letter code: Glutamyl-tRNA(Gln) amidotransferase subunit A (494 aa).

Catalysis depends on charge relay system residues Lys78 and Ser158. Ser182 (acyl-ester intermediate) is an active-site residue.

Belongs to the amidase family. GatA subfamily. As to quaternary structure, heterotrimer of A, B and C subunits.

It catalyses the reaction L-glutamyl-tRNA(Gln) + L-glutamine + ATP + H2O = L-glutaminyl-tRNA(Gln) + L-glutamate + ADP + phosphate + H(+). Functionally, allows the formation of correctly charged Gln-tRNA(Gln) through the transamidation of misacylated Glu-tRNA(Gln) in organisms which lack glutaminyl-tRNA synthetase. The reaction takes place in the presence of glutamine and ATP through an activated gamma-phospho-Glu-tRNA(Gln). This is Glutamyl-tRNA(Gln) amidotransferase subunit A from Xanthobacter autotrophicus (strain ATCC BAA-1158 / Py2).